The primary structure comprises 141 residues: Large ribosomal subunit protein uL11 (141 aa).

It belongs to the universal ribosomal protein uL11 family. As to quaternary structure, part of the ribosomal stalk of the 50S ribosomal subunit. Interacts with L10 and the large rRNA to form the base of the stalk. L10 forms an elongated spine to which L12 dimers bind in a sequential fashion forming a multimeric L10(L12)X complex. Post-translationally, one or more lysine residues are methylated.

Its function is as follows. Forms part of the ribosomal stalk which helps the ribosome interact with GTP-bound translation factors. The chain is Large ribosomal subunit protein uL11 from Clostridium tetani (strain Massachusetts / E88).